A 168-amino-acid chain; its full sequence is Nascent polypeptide-associated complex subunit alpha (168 aa).

One can recognise an NAC-A/B domain in the interval 14–78; that stretch reads SKNEKKAREL…PKVDDFTRRL (65 aa). Positions 83–129 are disordered; the sequence is QQAASAAKDPQSIQADMAAAAAAPAAPAAPAAAPEEDEAGQVDESGL. Residues 100 to 115 show a composition bias toward low complexity; that stretch reads AAAAAAPAAPAAPAAA. In terms of domain architecture, UBA spans 129 to 168; sequence LDGQDIELVMQQANVSRNKAVKALREHNSDIVNAIMSLSK.

Belongs to the NAC-alpha family. Part of the nascent polypeptide-associated complex (NAC), consisting of EGD2 and EGD1. NAC associates with ribosomes via EGD1.

It is found in the cytoplasm. The protein resides in the nucleus. Component of the nascent polypeptide-associated complex (NAC), a dynamic component of the ribosomal exit tunnel, protecting the emerging polypeptides from interaction with other cytoplasmic proteins to ensure appropriate nascent protein targeting. The NAC complex also promotes mitochondrial protein import by enhancing productive ribosome interactions with the outer mitochondrial membrane and blocks the inappropriate interaction of ribosomes translating non-secretory nascent polypeptides with translocation sites in the membrane of the endoplasmic reticulum. EGD2 may also be involved in transcription regulation. The protein is Nascent polypeptide-associated complex subunit alpha (EGD2) of Eremothecium gossypii (strain ATCC 10895 / CBS 109.51 / FGSC 9923 / NRRL Y-1056) (Yeast).